A 1461-amino-acid polypeptide reads, in one-letter code: MEESFLGDELTRLRSNSRMSSWRSSQSIREVFGGSSDVFMKNYSTRWREMAEEEEKELKWAAIDRLPTYNRLRKGMMKEVMSNGRVVHHEVDMTKLGNQDKKVLMESILKVVEDDNEQFLRRLRNRTDRVGIEIPKIEVRFQNLSVGGDAYVGTRALPTLLNSTLNTIEAVLGLIHLSPSKKRVVKILEDVSGIIRPSRMTLLLGPPGSGKTTFLKALAGKSEKDLRVNGKITYCGHEFHEFVPQRTSAYISQHDLHHGEMTVRETLDFAGRCLGVGTRYDLLVELSRREKEAGIMPDPQIDAFMKATAIDGQETSLITDYVLKILGLDICADIMVGDDMRRGISGGQKKRVTTGEMLVGPAKAFFMDEISKGLDSSTTYQIVKFMRQMVHINDITMVISLLQPAPETFDLFDDVIVLSEGQIVYQGPRENVLEFFEYMGFRCPERKAIADFLLEVTSKKDQEQYWFRKSRPYVYISVPEFSESFNSFQIGEQIIEELTIPYDKYSVHRAALVKNKYGISSWELFKSCFTREWLLMKRSSFLYIFKTTQITIMATIALTVFLRTQMKAGTVKDSAKFWGALFFSLINVMFNGMQELAMTVFRLPVFFKQRNSLFYPAWAFALPIWVLKIPISLVESAIWIILTYYTIGFAPAASRFFKQLLAFIGVHQMALSLFRFIAAAGRTQVVANTLGTFTLLMVFILGGFIVSKDDIQDWMIWGYYLSPMMYGQNAIAINEFLDDRWSAPTNGSQPTVGKTLLHARGLFTTESWYWISIGALFGFSLLFNVLFIAALTFLNPIGDTKAVKVENGDKNNRRPQETAIVGDIQMAPTRSQANTSSVIPFPNNESRKGMILPFQPLSLAFNHVNYYVDMPAEMKTQGVEEERLQLLRDASGAFRPGILTALVGVSGAGKTTLMDVLAGRKTGGYIEGSINISGYPKNQTTFARVSGYCEQNDIHSPYVTVYESLLYSAWLRLASDVKTETRKMFVEEVMELVELKLLRNALVGLPGVDGLSTEQRKRLTTAVELVANPSIIFMDEPTSGLDARAAAIVMRTVRKTVDTGRTVVCTIHQPSIDIFEAFDELLLMKIGGQVIYAGPLGHRSHKLVEYFETIPGVPKIRESDNPATWMLDVSSSSMEAQLVVDFAEVYANSNLYQRNQLLIKELSTPATCSKDLYFPTQYSQSFITQCKACFWKQHWSYWRNSQYNAIRFFMTVIIGILFGVIFWNKGNQIHRQQDLLNLLGATYAAVMFLGATNASAVQSVVAIERTVFYRERAAGMYSELPYAFAQVAIETIYVAIQTFVYSLLLFSMIGYQWTAVKFFYFYYFIFMCFTYFSMYGMMVVALTPGYQIAAIVMSFFLSFWNLFSGFLIPRPLIPVWWRWYYWASPVAWTIYGIFASQVGDRTDELELTGETEKIQVNEFLKEYLGYDHDFLLVVVFAHVGWVLLFFFVFAYGIKFLNYQKR.

In terms of domain architecture, ABC transporter 1 spans 172 to 445 (LGLIHLSPSK…FEYMGFRCPE (274 aa)). 205–212 (GPPGSGKT) contributes to the ATP binding site. In terms of domain architecture, ABC transmembrane type-2 1 spans 523 to 736 (ELFKSCFTRE…GQNAIAINEF (214 aa)). The next 6 helical transmembrane spans lie at 541-561 (FLYI…LTVF), 577-597 (FWGA…QELA), 622-642 (LPIW…WIIL), 660-680 (LLAF…IAAA), 685-705 (VVAN…GGFI), and 771-791 (ISIG…IAAL). Residues 859–1111 (LAFNHVNYYV…KLVEYFETIP (253 aa)) enclose the ABC transporter 2 domain. ATP is bound at residue 904-911 (GVSGAGKT). An ABC transmembrane type-2 2 domain is found at 1184 to 1398 (TQCKACFWKQ…TIYGIFASQV (215 aa)). Transmembrane regions (helical) follow at residues 1203–1223 (YNAI…VIFW), 1243–1263 (YAAV…VVAI), 1291–1311 (TIYV…MIGY), 1321–1341 (FYYF…MVVA), 1348–1368 (IAAI…GFLI), 1379–1399 (WYYW…SQVG), and 1430–1450 (FLLV…FVFA).

Belongs to the ABC transporter superfamily. ABCG family. PDR (TC 3.A.1.205) subfamily.

Its subcellular location is the membrane. In terms of biological role, may be a general defense protein. The protein is Pleiotropic drug resistance protein 2 (PDR2) of Nicotiana plumbaginifolia (Leadwort-leaved tobacco).